A 259-amino-acid chain; its full sequence is uncharacterized protein (259 aa).

This is an uncharacterized protein from Methanocaldococcus jannaschii (strain ATCC 43067 / DSM 2661 / JAL-1 / JCM 10045 / NBRC 100440) (Methanococcus jannaschii).